Here is a 1372-residue protein sequence, read N- to C-terminus: DNA-directed RNA polymerase subunit beta' (1372 aa).

Zn(2+) is bound by residues Cys69, Cys71, Cys84, and Cys87. Asp460, Asp462, and Asp464 together coordinate Mg(2+). 4 residues coordinate Zn(2+): Cys808, Cys882, Cys889, and Cys892.

It belongs to the RNA polymerase beta' chain family. In terms of assembly, the RNAP catalytic core consists of 2 alpha, 1 beta, 1 beta' and 1 omega subunit. When a sigma factor is associated with the core the holoenzyme is formed, which can initiate transcription. Mg(2+) is required as a cofactor. Requires Zn(2+) as cofactor.

The catalysed reaction is RNA(n) + a ribonucleoside 5'-triphosphate = RNA(n+1) + diphosphate. Its function is as follows. DNA-dependent RNA polymerase catalyzes the transcription of DNA into RNA using the four ribonucleoside triphosphates as substrates. The sequence is that of DNA-directed RNA polymerase subunit beta' from Rickettsia bellii (strain OSU 85-389).